The chain runs to 450 residues: Phosphoglucosamine mutase (450 aa).

Ser102 functions as the Phosphoserine intermediate in the catalytic mechanism. Ser102, Asp244, Asp246, and Asp248 together coordinate Mg(2+). Residue Ser102 is modified to Phosphoserine.

The protein belongs to the phosphohexose mutase family. The cofactor is Mg(2+). In terms of processing, activated by phosphorylation.

It catalyses the reaction alpha-D-glucosamine 1-phosphate = D-glucosamine 6-phosphate. In terms of biological role, catalyzes the conversion of glucosamine-6-phosphate to glucosamine-1-phosphate. This Nitratidesulfovibrio vulgaris (strain ATCC 29579 / DSM 644 / CCUG 34227 / NCIMB 8303 / VKM B-1760 / Hildenborough) (Desulfovibrio vulgaris) protein is Phosphoglucosamine mutase.